We begin with the raw amino-acid sequence, 154 residues long: MSKAKQALYLIVSLLVIIADQLLKNYIVTNFKIGDEKTIIPGVLSFTYLQNDGAAWNIFSGQMILFYLISIAAIAVVIYYLFNPKYKNGLFDTGLALVLGGIIGNFIDRLHLKYVIDMLQLDFIQFNIFNIADSAITVGIILVFIYLIFISEKD.

3 helical membrane-spanning segments follow: residues 8 to 28 (LYLIVSLLVIIADQLLKNYIV), 58 to 78 (IFSGQMILFYLISIAAIAVVI), and 88 to 108 (NGLFDTGLALVLGGIIGNFID). Residues Asp117 and Asp133 contribute to the active site. Residues 131 to 151 (IADSAITVGIILVFIYLIFIS) form a helical membrane-spanning segment.

Belongs to the peptidase A8 family.

It is found in the cell membrane. The catalysed reaction is Release of signal peptides from bacterial membrane prolipoproteins. Hydrolyzes -Xaa-Yaa-Zaa-|-(S,diacylglyceryl)Cys-, in which Xaa is hydrophobic (preferably Leu), and Yaa (Ala or Ser) and Zaa (Gly or Ala) have small, neutral side chains.. It functions in the pathway protein modification; lipoprotein biosynthesis (signal peptide cleavage). Its function is as follows. This protein specifically catalyzes the removal of signal peptides from prolipoproteins. The polypeptide is Lipoprotein signal peptidase (Lactobacillus johnsonii (strain CNCM I-12250 / La1 / NCC 533)).